The sequence spans 396 residues: Tryptophan synthase beta chain (396 aa).

At Lys-88 the chain carries N6-(pyridoxal phosphate)lysine.

Belongs to the TrpB family. Tetramer of two alpha and two beta chains. It depends on pyridoxal 5'-phosphate as a cofactor.

The enzyme catalyses (1S,2R)-1-C-(indol-3-yl)glycerol 3-phosphate + L-serine = D-glyceraldehyde 3-phosphate + L-tryptophan + H2O. The protein operates within amino-acid biosynthesis; L-tryptophan biosynthesis; L-tryptophan from chorismate: step 5/5. In terms of biological role, the beta subunit is responsible for the synthesis of L-tryptophan from indole and L-serine. This is Tryptophan synthase beta chain from Actinobacillus pleuropneumoniae serotype 7 (strain AP76).